The primary structure comprises 147 residues: Hemoglobin subunit deltaH (147 aa).

A Globin domain is found at 3–147; the sequence is RLTDSEKAEV…MANALAHKYH (145 aa). Residues His64 and His93 each coordinate heme b.

This sequence belongs to the globin family. In terms of assembly, heterotetramer of two delta chains and two alpha chains. In terms of tissue distribution, red blood cells.

The polypeptide is Hemoglobin subunit deltaH (Heterohyrax brucei (Yellow-spotted hyrax)).